Reading from the N-terminus, the 115-residue chain is Putative ethidium bromide resistance protein (115 aa).

Transmembrane regions (helical) follow at residues 4 to 21 (WLFL…TSAL), 30 to 47 (LAPS…FYFL), 58 to 79 (VAYA…WLLH), and 85 to 104 (AWGF…ARSP).

Belongs to the drug/metabolite transporter (DMT) superfamily. Small multidrug resistance (SMR) (TC 2.A.7.1) family.

The protein localises to the cell membrane. Functionally, one of the determinants for resistance to ethidium bromide and quaternary ammonium compounds. The polypeptide is Putative ethidium bromide resistance protein (ebr) (Escherichia coli).